The primary structure comprises 159 residues: Ribosomal RNA large subunit methyltransferase H (159 aa).

Residues Leu76, Gly108, and 127–132 (FGRLTY) each bind S-adenosyl-L-methionine.

The protein belongs to the RNA methyltransferase RlmH family. In terms of assembly, homodimer.

It localises to the cytoplasm. The enzyme catalyses pseudouridine(1915) in 23S rRNA + S-adenosyl-L-methionine = N(3)-methylpseudouridine(1915) in 23S rRNA + S-adenosyl-L-homocysteine + H(+). Specifically methylates the pseudouridine at position 1915 (m3Psi1915) in 23S rRNA. The sequence is that of Ribosomal RNA large subunit methyltransferase H from Enterococcus faecalis (strain ATCC 700802 / V583).